We begin with the raw amino-acid sequence, 1371 residues long: Probable serine/threonine-protein kinase DDB_G0293292 (1371 aa).

Protein kinase domains lie at 9-269 (NKIL…HPNT) and 1131-1371 (FKEV…QPTL). Residues 15–23 (IDDGNTKRK) and Lys39 each bind ATP. Asp143 functions as the Proton acceptor in the catalytic mechanism.

It belongs to the protein kinase superfamily. Ser/Thr protein kinase family.

It carries out the reaction L-seryl-[protein] + ATP = O-phospho-L-seryl-[protein] + ADP + H(+). The catalysed reaction is L-threonyl-[protein] + ATP = O-phospho-L-threonyl-[protein] + ADP + H(+). The protein is Probable serine/threonine-protein kinase DDB_G0293292 of Dictyostelium discoideum (Social amoeba).